We begin with the raw amino-acid sequence, 510 residues long: MLPLEKAFASPRSSPAPPDLPTPGSAAGVQQEEPETIPERTPADLEFSRLRFREFVYQEAAGPHQTLARLHELCRQWLMPEARSKEQMLELLVLEQFLGILPDKVRPWVVAQYPESCKKAASLVEGLADVLEEPGMLLGSPAGSSSILSDGVYERHMDPLLLPGELASPSQALGAGEIPAPSETPWLSPDPLFLEQRRVREAKTEEDGPANTEQKLKSFPEDPQHLGEWGHLDPAEENLKSYRKLLLWGYQLSQPDAASRLDTEELRLVERDPQGSSLPEGGRRQESAGCACEEAAPAGVLPELPTEAPPGDALADPPSGTTEEEEEQPGKAPDPQDPQDAESDSATGSQRQSVIQQPAPDRGTAKLGTKRPHPEDGDGQSLEGVSSSGDSAGLEAGQGPGADEPGLSRGKPYACGECGEAFAWLSHLMEHHSSHGGRKRYACQGCWKTFHFSLALAEHQKTHEKEKSYALGGARGPQPSTREAQAGARAGGPPESVEGEAPPAPPEAQR.

The segment at 1–40 is disordered; sequence MLPLEKAFASPRSSPAPPDLPTPGSAAGVQQEEPETIPER. The SCAN box domain occupies 49–131; that stretch reads RLRFREFVYQ…SLVEGLADVL (83 aa). Disordered stretches follow at residues 172 to 191, 201 to 231, 263 to 413, and 461 to 510; these read ALGAGEIPAPSETPWLSPDP, EAKTEEDGPANTEQKLKSFPEDPQHLGEWGH, TEEL…GKPY, and KTHE…EAQR. Basic and acidic residues-rich tracts occupy residues 214-231 and 263-273; these read QKLKSFPEDPQHLGEWGH and TEELRLVERDP. A compositionally biased stretch (low complexity) spans 288–299; the sequence is AGCACEEAAPAG. Positions 344–356 are enriched in polar residues; the sequence is DSATGSQRQSVIQ. 2 consecutive C2H2-type zinc fingers follow at residues 413–435 and 441–463; these read YACGECGEAFAWLSHLMEHHSSH and YACQGCWKTFHFSLALAEHQKTH. The span at 491-501 shows a compositional bias: low complexity; that stretch reads GGPPESVEGEA.

Belongs to the krueppel C2H2-type zinc-finger protein family.

It is found in the nucleus. Functionally, may be involved in transcriptional regulation. This Homo sapiens (Human) protein is Zinc finger and SCAN domain-containing protein 18 (ZSCAN18).